A 91-amino-acid chain; its full sequence is Probable Fe(2+)-trafficking protein (91 aa).

This sequence belongs to the Fe(2+)-trafficking protein family.

Its function is as follows. Could be a mediator in iron transactions between iron acquisition and iron-requiring processes, such as synthesis and/or repair of Fe-S clusters in biosynthetic enzymes. This chain is Probable Fe(2+)-trafficking protein, found in Ralstonia nicotianae (strain ATCC BAA-1114 / GMI1000) (Ralstonia solanacearum).